Here is a 424-residue protein sequence, read N- to C-terminus: MGQWKVMILICLYGAVKEFRPTEPYMYEYQHTVLNISEHTLNSEVYPIWTYSYLVALIPSFLLTDVLLYKPILIIEALSYFACWMIFVFGRSVWCMQLLELFYGWATATEIAYFAYIYVKVPKEDYKSATAYTRAALLVGRFLAYTLAQLLIGLNWADYMTLNIINLVSMTFAVFLAAILPHVPWRNAYQKKLEDKKSVTDLESLVSEAKYSDYLKLFFVELHQNLYTIYKNPLVLKWSIWSALSSCIFYQIINYTQTLWGTLPEKENKYNGIPEALVPLLGIPADLITRQMNVNWNRWGDALISVGSLLQAGLLFWMSQSHEIIILYICYIIYRVIYQLTTTIAQSTLALTLDSRLFGLLFGINTFVALALQSILTAIVIDAEKLAIRAQFVVYSGYHIVVATLFGIIFGIWAIRTIWRKRSH.

Residue N35 is glycosylated (N-linked (GlcNAc...) asparagine). The next 5 membrane-spanning stretches (helical) occupy residues 55–75 (VALI…ILII), 78–98 (LSYF…CMQL), 101–119 (LFYG…YIYV), 136–156 (ALLV…GLNW), and 164–184 (IINL…PHVP). The N-linked (GlcNAc...) asparagine glycan is linked to N254. 3 helical membrane passes run 313–333 (GLLF…CYII), 361–381 (LFGI…AIVI), and 392–412 (FVVY…IFGI).

This sequence belongs to the reduced folate carrier (RFC) transporter (TC 2.A.48) family.

The protein resides in the membrane. The polypeptide is Folate-like transporter 3 (folt-3) (Caenorhabditis elegans).